Here is a 154-residue protein sequence, read N- to C-terminus: Protein X (154 aa).

Positions 68–117 (PCALRFTSARRMETTVNAHQFLPKVLYKRTLGLSVMSTTDLEAYFKDCLF) are mitochondrial targeting sequence.

Belongs to the orthohepadnavirus protein X family. May form homodimer. May interact with host CEBPA, CFLAR, CREB1, DDB1, E4F1, HBXIP, HSPD1/HSP60, NFKBIA, POLR2E and SMAD4. Interacts with host SMC5-SMC6 complex and induces its degradation. Interacts with host TRPC4AP; leading to prevent ubiquitination of TRPC4AP. Interacts with host PLSCR1; this interaction promotes ubiquitination and degradation of HBx and impairs HBx-mediated cell proliferation. A fraction may be phosphorylated in insect cells and HepG2 cells, a human hepatoblastoma cell line. Phosphorylated in vitro by host protein kinase C or mitogen-activated protein kinase. N-acetylated in insect cells.

It localises to the host cytoplasm. The protein localises to the host nucleus. The protein resides in the host mitochondrion. Multifunctional protein that plays a role in silencing host antiviral defenses and promoting viral transcription. Does not seem to be essential for HBV infection. May be directly involved in development of cirrhosis and liver cancer (hepatocellular carcinoma). Most of cytosolic activities involve modulation of cytosolic calcium. The effect on apoptosis is controversial depending on the cell types in which the studies have been conducted. May induce apoptosis by localizing in mitochondria and causing loss of mitochondrial membrane potential. May also modulate apoptosis by binding host CFLAR, a key regulator of the death-inducing signaling complex (DISC). Promotes viral transcription by using the host E3 ubiquitin ligase DDB1 to target the SMC5-SMC6 complex to proteasomal degradation. This host complex would otherwise bind to viral episomal DNA, and prevents its transcription. Moderately stimulates transcription of many different viral and cellular transcription elements. Promoters and enhancers stimulated by HBx contain DNA binding sites for NF-kappa-B, AP-1, AP-2, c-EBP, ATF/CREB, or the calcium-activated factor NF-AT. In Homo sapiens (Human), this protein is Protein X.